The chain runs to 113 residues: Large ribosomal subunit protein eL31A (113 aa).

It belongs to the eukaryotic ribosomal protein eL31 family. In terms of assembly, component of the large ribosomal subunit (LSU). Mature yeast ribosomes consist of a small (40S) and a large (60S) subunit. The 40S small subunit contains 1 molecule of ribosomal RNA (18S rRNA) and 33 different proteins (encoded by 57 genes). The large 60S subunit contains 3 rRNA molecules (25S, 5.8S and 5S rRNA) and 46 different proteins (encoded by 81 genes).

It is found in the cytoplasm. Component of the ribosome, a large ribonucleoprotein complex responsible for the synthesis of proteins in the cell. The small ribosomal subunit (SSU) binds messenger RNAs (mRNAs) and translates the encoded message by selecting cognate aminoacyl-transfer RNA (tRNA) molecules. The large subunit (LSU) contains the ribosomal catalytic site termed the peptidyl transferase center (PTC), which catalyzes the formation of peptide bonds, thereby polymerizing the amino acids delivered by tRNAs into a polypeptide chain. The nascent polypeptides leave the ribosome through a tunnel in the LSU and interact with protein factors that function in enzymatic processing, targeting, and the membrane insertion of nascent chains at the exit of the ribosomal tunnel. This is Large ribosomal subunit protein eL31A from Saccharomyces cerevisiae (strain ATCC 204508 / S288c) (Baker's yeast).